A 331-amino-acid chain; its full sequence is Putative phosphoribosylaminoimidazole-succinocarboxamide synthase (331 aa).

The protein belongs to the SAICAR synthetase family. Highly divergent.

The enzyme catalyses 5-amino-1-(5-phospho-D-ribosyl)imidazole-4-carboxylate + L-aspartate + ATP = (2S)-2-[5-amino-1-(5-phospho-beta-D-ribosyl)imidazole-4-carboxamido]succinate + ADP + phosphate + 2 H(+). Its pathway is purine metabolism; IMP biosynthesis via de novo pathway; 5-amino-1-(5-phospho-D-ribosyl)imidazole-4-carboxamide from 5-amino-1-(5-phospho-D-ribosyl)imidazole-4-carboxylate: step 1/2. This chain is Putative phosphoribosylaminoimidazole-succinocarboxamide synthase (purC), found in Archaeoglobus fulgidus (strain ATCC 49558 / DSM 4304 / JCM 9628 / NBRC 100126 / VC-16).